The primary structure comprises 583 residues: 5-aminolevulinate synthase, erythroid-specific, mitochondrial (583 aa).

Arginine 158 serves as a coordination point for succinyl-CoA. Cysteine 253 and phenylalanine 254 together coordinate pyridoxal 5'-phosphate. The succinyl-CoA site is built by serine 275 and arginine 294. Residues serine 327, histidine 355, and threonine 383 each contribute to the pyridoxal 5'-phosphate site. Lysine 386 is an active-site residue. N6-(pyridoxal phosphate)lysine is present on lysine 386. Pyridoxal 5'-phosphate is bound by residues threonine 415 and threonine 416. A succinyl-CoA-binding site is contributed by threonine 503.

Belongs to the class-II pyridoxal-phosphate-dependent aminotransferase family. In terms of assembly, homodimer. Pyridoxal 5'-phosphate serves as cofactor.

Its subcellular location is the mitochondrion inner membrane. It carries out the reaction succinyl-CoA + glycine + H(+) = 5-aminolevulinate + CO2 + CoA. The protein operates within porphyrin-containing compound metabolism; protoporphyrin-IX biosynthesis; 5-aminolevulinate from glycine: step 1/1. Functionally, catalyzes the pyridoxal 5'-phosphate (PLP)-dependent condensation of succinyl-CoA and glycine to form aminolevulinic acid (ALA), with CoA and CO2 as by-products. Contributes significantly to heme formation during erythropoiesis. In Danio rerio (Zebrafish), this protein is 5-aminolevulinate synthase, erythroid-specific, mitochondrial (alas2).